Reading from the N-terminus, the 225-residue chain is ATP phosphoribosyltransferase (225 aa).

This sequence belongs to the ATP phosphoribosyltransferase family. Short subfamily. In terms of assembly, heteromultimer composed of HisG and HisZ subunits.

It localises to the cytoplasm. The enzyme catalyses 1-(5-phospho-beta-D-ribosyl)-ATP + diphosphate = 5-phospho-alpha-D-ribose 1-diphosphate + ATP. It participates in amino-acid biosynthesis; L-histidine biosynthesis; L-histidine from 5-phospho-alpha-D-ribose 1-diphosphate: step 1/9. In terms of biological role, catalyzes the condensation of ATP and 5-phosphoribose 1-diphosphate to form N'-(5'-phosphoribosyl)-ATP (PR-ATP). Has a crucial role in the pathway because the rate of histidine biosynthesis seems to be controlled primarily by regulation of HisG enzymatic activity. The chain is ATP phosphoribosyltransferase from Herminiimonas arsenicoxydans.